An 83-amino-acid chain; its full sequence is Large ribosomal subunit protein bL27c (83 aa).

The disordered stretch occupies residues 1–24; it reads MAHKKGAGSTKNGRDSNAKRLGVK.

It belongs to the bacterial ribosomal protein bL27 family.

Its subcellular location is the plastid. It localises to the chloroplast. This is Large ribosomal subunit protein bL27c (rpl27) from Trieres chinensis (Marine centric diatom).